A 167-amino-acid polypeptide reads, in one-letter code: Transcriptional regulator MraZ (167 aa).

SpoVT-AbrB domains follow at residues 8–51 and 92–135; these read ESNH…YGDH and SFPT…NPAT.

Belongs to the MraZ family. Forms oligomers.

It is found in the cytoplasm. It localises to the nucleoid. The protein is Transcriptional regulator MraZ of Ruegeria pomeroyi (strain ATCC 700808 / DSM 15171 / DSS-3) (Silicibacter pomeroyi).